The primary structure comprises 241 residues: Ashwin (241 aa).

Disordered regions lie at residues 1–21, 82–102, and 212–241; these read MAAQ…SARS, KMME…SVTA, and KRSV…CTWP. The segment covering 11 to 21 has biased composition (basic and acidic residues); it reads GGKEERVSARS.

It belongs to the ashwin family.

It localises to the nucleus. This Gallus gallus (Chicken) protein is Ashwin.